Here is a 444-residue protein sequence, read N- to C-terminus: Interferon-induced protein 44 (444 aa).

The TLDc domain occupies 1–152 (MAVTTRLTWL…IQDYEVFRCE (152 aa)).

The protein belongs to the IFI44 family. As to expression, hepatocytes.

The protein localises to the cytoplasm. Its function is as follows. This protein aggregates to form microtubular structures. This is Interferon-induced protein 44 (IFI44) from Pan troglodytes (Chimpanzee).